Reading from the N-terminus, the 396-residue chain is Cell division protein DivIB (396 aa).

Disordered regions lie at residues 1 to 23 and 37 to 116; these read MSKDKKNEDKETLEELKELSEWQ and EVAL…ATKE. At 1-130 the chain is on the cytoplasmic side; it reads MSKDKKNEDK…AKIPGIHILR (130 aa). Basic and acidic residues-rich tracts occupy residues 37-65 and 75-116; these read EVALAEEKEKERQARMGEESEKSEDKQDQ and ESAK…ATKE. A helical transmembrane segment spans residues 131 to 151; the sequence is AFTILFPSLLLLIVSAYLLSP. Over 152–396 the chain is Extracellular; the sequence is YATMKDIRVE…NQTNQRSSRR (245 aa). Residues 153 to 223 enclose the POTRA domain; that stretch reads ATMKDIRVEG…TKFTIKVKEY (71 aa). A compositionally biased stretch (basic and acidic residues) spans 361–385; sequence KAKQEAKEAEKKQEEEQKKQEEESN. The interval 361-396 is disordered; sequence KAKQEAKEAEKKQEEEQKKQEEESNRNQTNQRSSRR. Low complexity predominate over residues 386–396; sequence RNQTNQRSSRR.

Belongs to the FtsQ/DivIB family. DivIB subfamily.

The protein localises to the cell membrane. Its function is as follows. Cell division protein that may be involved in stabilizing or promoting the assembly of the division complex. In Streptococcus pneumoniae (strain ATCC BAA-255 / R6), this protein is Cell division protein DivIB.